The following is a 96-amino-acid chain: Large ribosomal subunit protein bL28 (96 aa).

A disordered region spans residues 1–23 (MSRVCELSGKAPMTGNTVSHANN).

Belongs to the bacterial ribosomal protein bL28 family.

The protein is Large ribosomal subunit protein bL28 of Cereibacter sphaeroides (strain ATCC 17025 / ATH 2.4.3) (Rhodobacter sphaeroides).